The primary structure comprises 80 residues: Raniseptin-7 (80 aa).

The N-terminal stretch at 1 to 22 is a signal peptide; that stretch reads MAFLKKSLFLVLFLGIVSLSIC. Residues 23–49 constitute a propeptide that is removed on maturation; the sequence is EEEKREGEEEEKQEEENEELSEEELRE. The interval 27 to 46 is disordered; sequence REGEEEEKQEEENEELSEEE. Over residues 30–44 the composition is skewed to acidic residues; it reads EEEEKQEEENEELSE.

Belongs to the frog skin active peptide (FSAP) family. Dermaseptin subfamily. As to expression, expressed by the skin glands.

The protein localises to the secreted. Functionally, has antibacterial activity. This Boana raniceps (Chaco tree frog) protein is Raniseptin-7.